Consider the following 249-residue polypeptide: Type III pantothenate kinase (249 aa).

6-13 (DCGNSLIK) is an ATP binding site. Substrate-binding positions include Tyr-93 and 100–103 (GLDR). The Proton acceptor role is filled by Asp-102. Asp-122 contributes to the K(+) binding site. Thr-125 provides a ligand contact to ATP. Thr-181 serves as a coordination point for substrate.

Belongs to the type III pantothenate kinase family. Homodimer. NH4(+) is required as a cofactor. It depends on K(+) as a cofactor.

Its subcellular location is the cytoplasm. It carries out the reaction (R)-pantothenate + ATP = (R)-4'-phosphopantothenate + ADP + H(+). Its pathway is cofactor biosynthesis; coenzyme A biosynthesis; CoA from (R)-pantothenate: step 1/5. Catalyzes the phosphorylation of pantothenate (Pan), the first step in CoA biosynthesis. The sequence is that of Type III pantothenate kinase from Pseudomonas paraeruginosa (strain DSM 24068 / PA7) (Pseudomonas aeruginosa (strain PA7)).